We begin with the raw amino-acid sequence, 399 residues long: Argininosuccinate synthase (399 aa).

A9–S17 provides a ligand contact to ATP. Y88 is a binding site for L-citrulline. ATP is bound at residue G118. L-aspartate contacts are provided by T120, N124, and D125. An L-citrulline-binding site is contributed by N124. R128, S176, E261, and Y273 together coordinate L-citrulline.

The protein belongs to the argininosuccinate synthase family. Type 1 subfamily. As to quaternary structure, homotetramer.

It is found in the cytoplasm. It catalyses the reaction L-citrulline + L-aspartate + ATP = 2-(N(omega)-L-arginino)succinate + AMP + diphosphate + H(+). It participates in amino-acid biosynthesis; L-arginine biosynthesis; L-arginine from L-ornithine and carbamoyl phosphate: step 2/3. This is Argininosuccinate synthase from Mycobacterium leprae (strain TN).